The primary structure comprises 1013 residues: 2-oxoglutarate dehydrogenase, mitochondrial (1013 aa).

A mitochondrion-targeting transit peptide spans Met-1 to Lys-39. Arg-302, Asp-403, Asn-436, Ile-438, and Gln-664 together coordinate thiamine diphosphate. The Mg(2+) site is built by Asp-403, Asn-436, and Ile-438.

This sequence belongs to the alpha-ketoglutarate dehydrogenase family. In terms of assembly, homodimer. Component of the 2-oxoglutarate dehydrogenase complex. Thiamine diphosphate is required as a cofactor. The cofactor is Mg(2+).

The protein resides in the mitochondrion matrix. It carries out the reaction N(6)-[(R)-lipoyl]-L-lysyl-[protein] + 2-oxoglutarate + H(+) = N(6)-[(R)-S(8)-succinyldihydrolipoyl]-L-lysyl-[protein] + CO2. Functionally, the 2-oxoglutarate dehydrogenase complex catalyzes the overall conversion of 2-oxoglutarate to succinyl-CoA and CO(2). It contains multiple copies of three enzymatic components: 2-oxoglutarate dehydrogenase (E1), dihydrolipoamide succinyltransferase (E2) and lipoamide dehydrogenase (E3). This chain is 2-oxoglutarate dehydrogenase, mitochondrial (ogdh), found in Dictyostelium discoideum (Social amoeba).